Here is a 121-residue protein sequence, read N- to C-terminus: Basic phospholipase A2 BbTX-III (121 aa).

Ca(2+) contacts are provided by Tyr27, Gly29, and Gly31. 6 disulfides stabilise this stretch: Cys28–Cys44, Cys43–Cys95, Cys49–Cys121, Cys50–Cys88, Cys58–Cys82, and Cys76–Cys86. The active site involves His47. Asp48 contacts Ca(2+). Asp89 is an active-site residue.

The protein belongs to the phospholipase A2 family. Group II subfamily. D49 sub-subfamily. Homodimer; non-covalently linked. Ca(2+) is required as a cofactor. As to expression, expressed by the venom gland.

The protein localises to the secreted. It catalyses the reaction a 1,2-diacyl-sn-glycero-3-phosphocholine + H2O = a 1-acyl-sn-glycero-3-phosphocholine + a fatty acid + H(+). Functionally, snake venom phospholipase A2 (PLA2) that exhibits myotoxin and anticoagulant activity. Displays edema-inducing activities in mouse paw. Also displays cytotoxic activity against some cell lines and myotubes, and antimicrobial activities against E.coli, C.albicans and Leishmania. PLA2 catalyzes the calcium-dependent hydrolysis of the 2-acyl groups in 3-sn-phosphoglycerides. This chain is Basic phospholipase A2 BbTX-III, found in Bothrops brazili (Brazil's lancehead).